The chain runs to 274 residues: Ribosome biogenesis protein UTP30 (274 aa).

It belongs to the universal ribosomal protein uL1 family. Highly divergent. As to quaternary structure, component of the 90S pre-ribosomes. Interacts with FAF1.

Its subcellular location is the nucleus. The protein localises to the nucleolus. Functionally, involved in rRNA-processing and ribosome biosynthesis. The sequence is that of Ribosome biogenesis protein UTP30 (UTP30) from Saccharomyces cerevisiae (strain ATCC 204508 / S288c) (Baker's yeast).